We begin with the raw amino-acid sequence, 310 residues long: Putative HTH-type transcriptional regulatory protein LS215_1371 (310 aa).

The HTH cro/C1-type domain maps to 125–180; that stretch reads LKHKREEMGYSIGDVAKFLGVSRKAIYDYEKGDSDVSLEVAEKLIDLFGDDIIGDV. The H-T-H motif DNA-binding region spans 136 to 155; sequence IGDVAKFLGVSRKAIYDYEK.

The sequence is that of Putative HTH-type transcriptional regulatory protein LS215_1371 from Saccharolobus islandicus (strain L.S.2.15 / Lassen #1) (Sulfolobus islandicus).